Consider the following 582-residue polypeptide: Protein alan shepard (582 aa).

Residues 1–12 (MHPRYSPAPPPQ) are compositionally biased toward pro residues. Residues 1 to 73 (MHPRYSPAPP…AAPPTSRSAF (73 aa)) form a disordered region. At Tyr-5 the chain carries Phosphotyrosine. Over residues 13–24 (QQQQMGGPPHQQ) the composition is skewed to low complexity. A compositionally biased stretch (gly residues) spans 25-35 (QGGGGGGGGSM). Residues 37–57 (GPSNAQQLPPQIPRSQNYSNG) are compositionally biased toward polar residues. Residues 58–72 (SSSSAAAAPPTSRSA) are compositionally biased toward low complexity. Tyr-125 and Tyr-142 each carry phosphotyrosine. The interval 164 to 225 (PATTTYGQRV…TVQNQNQQGG (62 aa)) is disordered. Positions 178–225 (SPSNTNSSSSSNTGSQSGTLSTSLSNTTNTNTNMGPNGTVQNQNQQGG) are enriched in low complexity. 2 RRM domains span residues 231–304 (TNLY…MAKQ) and 310–389 (TNLY…FADG). The segment at 555–582 (PMTDSEQASTAASPDEAYTQYPHQAAPK) is disordered.

Functionally, has a role in the perception of gravity. The polypeptide is Protein alan shepard (Drosophila erecta (Fruit fly)).